Here is a 147-residue protein sequence, read N- to C-terminus: Large ribosomal subunit protein uL13 (147 aa).

This sequence belongs to the universal ribosomal protein uL13 family. Part of the 50S ribosomal subunit.

In terms of biological role, this protein is one of the early assembly proteins of the 50S ribosomal subunit, although it is not seen to bind rRNA by itself. It is important during the early stages of 50S assembly. The chain is Large ribosomal subunit protein uL13 from Mycobacterium leprae (strain Br4923).